Here is a 366-residue protein sequence, read N- to C-terminus: L-tyrosine C(3)-methyltransferase (366 aa).

Residues 1-12 show a composition bias toward polar residues; the sequence is MTISLENTTVGQ. A disordered region spans residues 1-22; it reads MTISLENTTVGQNPAGGPPTGK. An S-adenosyl-L-methionine-binding site is contributed by glutamate 223.

Belongs to the class I-like SAM-binding methyltransferase superfamily. Cation-independent O-methyltransferase family.

The catalysed reaction is L-tyrosine + S-adenosyl-L-methionine = 3-methyl-L-tyrosine + S-adenosyl-L-homocysteine + H(+). The protein operates within antibiotic biosynthesis. Functionally, C-methyltransferase that mediates the methylation of tyrosine into 3-methyl-L-tyrosine (3-Me-Tyr) in biosynthesis of saframycin A, a potent antitumor antibiotic that belongs to the tetrahydroisoquinoline family. Involved in biosynthesis of 3-hydroxy-5-methyl-O-methyltyrosine (3-OH-5-Me-OMe-Tyr), a core structure of saframycin A. In Streptomyces lavendulae, this protein is L-tyrosine C(3)-methyltransferase.